We begin with the raw amino-acid sequence, 654 residues long: Probable Xaa-Pro aminopeptidase P (654 aa).

Mn(2+)-binding residues include Asp449, Asp460, Glu558, and Glu572.

This sequence belongs to the peptidase M24B family. It depends on Mn(2+) as a cofactor.

It catalyses the reaction Release of any N-terminal amino acid, including proline, that is linked to proline, even from a dipeptide or tripeptide.. Functionally, catalyzes the removal of a penultimate prolyl residue from the N-termini of peptides. The protein is Probable Xaa-Pro aminopeptidase P (ampp) of Neosartorya fischeri (strain ATCC 1020 / DSM 3700 / CBS 544.65 / FGSC A1164 / JCM 1740 / NRRL 181 / WB 181) (Aspergillus fischerianus).